The primary structure comprises 371 residues: 4-hydroxy-3-methylbut-2-en-1-yl diphosphate synthase (flavodoxin) (371 aa).

[4Fe-4S] cluster is bound by residues Cys-270, Cys-273, Cys-305, and Glu-312.

Belongs to the IspG family. It depends on [4Fe-4S] cluster as a cofactor.

It catalyses the reaction (2E)-4-hydroxy-3-methylbut-2-enyl diphosphate + oxidized [flavodoxin] + H2O + 2 H(+) = 2-C-methyl-D-erythritol 2,4-cyclic diphosphate + reduced [flavodoxin]. It participates in isoprenoid biosynthesis; isopentenyl diphosphate biosynthesis via DXP pathway; isopentenyl diphosphate from 1-deoxy-D-xylulose 5-phosphate: step 5/6. Functionally, converts 2C-methyl-D-erythritol 2,4-cyclodiphosphate (ME-2,4cPP) into 1-hydroxy-2-methyl-2-(E)-butenyl 4-diphosphate. The sequence is that of 4-hydroxy-3-methylbut-2-en-1-yl diphosphate synthase (flavodoxin) from Chromohalobacter salexigens (strain ATCC BAA-138 / DSM 3043 / CIP 106854 / NCIMB 13768 / 1H11).